The primary structure comprises 401 residues: Argininosuccinate synthase (401 aa).

ATP-binding positions include 10–18 and Ala38; that span reads AYSGGVDTS. An L-citrulline-binding site is contributed by Tyr89. Gly119 lines the ATP pocket. L-aspartate-binding residues include Thr121, Asn125, and Asp126. Residue Asn125 participates in L-citrulline binding. Arg129, Ser177, Ser186, Glu262, and Tyr274 together coordinate L-citrulline.

It belongs to the argininosuccinate synthase family. Type 1 subfamily. Homotetramer.

The protein resides in the cytoplasm. It catalyses the reaction L-citrulline + L-aspartate + ATP = 2-(N(omega)-L-arginino)succinate + AMP + diphosphate + H(+). It functions in the pathway amino-acid biosynthesis; L-arginine biosynthesis; L-arginine from L-ornithine and carbamoyl phosphate: step 2/3. The protein is Argininosuccinate synthase of Microcystis aeruginosa (strain NIES-843 / IAM M-2473).